The chain runs to 1877 residues: Proprotein convertase subtilisin/kexin type 5 (1877 aa).

Residues 1–34 (MDWDWGNRCSRPGRRDLLCVLALLAGCLLPVCRT) form the signal peptide. Residues 35–116 (RVYTNHWAVK…QQVVKKRTKR (82 aa)) constitute a propeptide that is removed on maturation. Residues 117-1768 (DYDLSHAQST…EAEFYEHTKT (1652 aa)) lie on the Extracellular side of the membrane. In terms of domain architecture, Peptidase S8 spans 136 to 455 (MWYMHCSDNT…FGLMDAEAMV (320 aa)). Active-site charge relay system residues include Asp-173 and His-214. N-linked (GlcNAc...) asparagine glycosylation is found at Asn-227 and Asn-383. Catalysis depends on Ser-388, which acts as the Charge relay system. One can recognise a P/Homo B domain in the interval 463–603 (TVPQQHVCVE…SLVLYGTSVQ (141 aa)). A Cell attachment site motif is present at residues 521 to 523 (RGD). FU repeat units lie at residues 632–682 (EDYA…GHYH), 685–732 (KKRC…GSYE), 736–779 (KNVC…GQFF), 781–826 (GHDC…SYYL), 834–881 (YKSC…GEYI), 884–929 (QGHC…WKFE), 931–981 (KKQC…GHYP), 984–1030 (GHAC…GEFQ), 1034–1079 (YEEC…KTFG), 1081–1123 (KWEC…GFHG), 1127–1168 (LGEC…STWP), 1206–1248 (TSQN…GTWP), 1252–1299 (SGSC…GFYA), 1301–1345 (DGVC…KHVA), 1347–1390 (EGVC…SFYP), 1392–1438 (MRQC…GTYK), 1442–1487 (NDEC…VEYW), 1491–1536 (SHRC…GYHT), 1540–1585 (SQQC…GYYG), 1589–1636 (SGRC…HYYA), 1640–1685 (AQTC…GEYR), and 1691–1738 (NFNC…SHSR). A CRM (Cys-rich motif) region spans residues 638 to 1753 (CDPECSEVGC…CDCQSSTDEC (1116 aa)). A glycan (N-linked (GlcNAc...) asparagine) is linked at Asn-667. N-linked (GlcNAc...) asparagine glycans are attached at residues Asn-754, Asn-804, and Asn-854. N-linked (GlcNAc...) asparagine glycans are attached at residues Asn-951 and Asn-1016. An N-linked (GlcNAc...) asparagine glycan is attached at Asn-1220. Residue Asn-1317 is glycosylated (N-linked (GlcNAc...) asparagine). An N-linked (GlcNAc...) asparagine glycan is attached at Asn-1523. 2 N-linked (GlcNAc...) asparagine glycosylation sites follow: Asn-1711 and Asn-1733. The chain crosses the membrane as a helical span at residues 1769-1789 (ALLVTSGAMLLLLLGAAAVVW). The Cytoplasmic segment spans residues 1790 to 1877 (RKSRSRPVAK…EYDDESYSYQ (88 aa)). AC regions lie at residues 1825 to 1844 (VIEYRDRDYDEDDEDDIVYM) and 1856 to 1877 (YGLLDETEDDELEYDDESYSYQ).

The protein belongs to the peptidase S8 family. As to expression, PC5A is expressed in most tissues but is most abundant in the intestine and adrenals. PC5B is expressed in the intestine, adrenals and lung but not in the brain.

The protein resides in the secreted. The protein localises to the endomembrane system. Serine endoprotease that processes various proproteins by cleavage at paired basic amino acids, recognizing the RXXX[KR]R consensus motif. Likely functions in the constitutive and regulated secretory pathways. Plays an essential role in pregnancy establishment by proteolytic activation of a number of important factors such as BMP2, CALD1 and alpha-integrins. May be responsible for the maturation of gastrointestinal peptides. May be involved in the cellular proliferation of adrenal cortex via the activation of growth factors. In Mus musculus (Mouse), this protein is Proprotein convertase subtilisin/kexin type 5 (Pcsk5).